The sequence spans 243 residues: Ribosomal RNA small subunit methyltransferase G (243 aa).

S-adenosyl-L-methionine is bound by residues Gly-80, Phe-85, 132 to 133 (IE), and Arg-151.

Belongs to the methyltransferase superfamily. RNA methyltransferase RsmG family.

It localises to the cytoplasm. Its function is as follows. Specifically methylates the N7 position of a guanine in 16S rRNA. The chain is Ribosomal RNA small subunit methyltransferase G from Synechococcus sp. (strain CC9902).